Reading from the N-terminus, the 414-residue chain is 4-hydroxy-3-methylbut-2-en-1-yl diphosphate synthase (flavodoxin) (414 aa).

[4Fe-4S] cluster-binding residues include cysteine 304, cysteine 307, cysteine 350, and glutamate 357.

It belongs to the IspG family. [4Fe-4S] cluster is required as a cofactor.

It carries out the reaction (2E)-4-hydroxy-3-methylbut-2-enyl diphosphate + oxidized [flavodoxin] + H2O + 2 H(+) = 2-C-methyl-D-erythritol 2,4-cyclic diphosphate + reduced [flavodoxin]. It functions in the pathway isoprenoid biosynthesis; isopentenyl diphosphate biosynthesis via DXP pathway; isopentenyl diphosphate from 1-deoxy-D-xylulose 5-phosphate: step 5/6. Its function is as follows. Converts 2C-methyl-D-erythritol 2,4-cyclodiphosphate (ME-2,4cPP) into 1-hydroxy-2-methyl-2-(E)-butenyl 4-diphosphate. The polypeptide is 4-hydroxy-3-methylbut-2-en-1-yl diphosphate synthase (flavodoxin) (Aromatoleum aromaticum (strain DSM 19018 / LMG 30748 / EbN1) (Azoarcus sp. (strain EbN1))).